A 334-amino-acid chain; its full sequence is Antho-RFamide neuropeptides (334 aa).

Residues 1–26 (MLVAMTTASYVTILVTLLFHILTINA) form the signal peptide. Residues 27-116 (KTVTKRAKET…REFQGRFGRE (90 aa)) constitute a propeptide that is removed on maturation. 2 stretches are compositionally biased toward basic and acidic residues: residues 115 to 289 (REQG…RELL) and 303 to 334 (PQTRFRDVQMTRRNVAKKDKIEESNDEEANKS). The disordered stretch occupies residues 115 to 334 (REQGRFGREE…ESNDEEANKS (220 aa)). Residue F120 is modified to Phenylalanine amide. A propeptide spanning residues 122 to 125 (REED) is cleaved from the precursor. F129 is modified (phenylalanine amide). The propeptide occupies 131 to 134 (REED). At F138 the chain carries Phenylalanine amide. A propeptide spanning residues 140–142 (REE) is cleaved from the precursor. F146 carries the post-translational modification Phenylalanine amide. The propeptide occupies 148–151 (REED). Position 155 is a phenylalanine amide (F155). The propeptide occupies 157–160 (REED). A Phenylalanine amide modification is found at F164. A propeptide spanning residues 166–169 (REED) is cleaved from the precursor. Phenylalanine amide is present on F173. A propeptide spanning residues 175–178 (REEE) is cleaved from the precursor. Phenylalanine amide is present on F182. Positions 184–187 (REED) are excised as a propeptide. F191 bears the Phenylalanine amide mark. Positions 193-196 (REEE) are excised as a propeptide. Position 200 is a phenylalanine amide (F200). A propeptide spanning residues 202-205 (REED) is cleaved from the precursor. F209 carries the post-translational modification Phenylalanine amide. Positions 211–214 (REED) are excised as a propeptide. F218 is subject to Phenylalanine amide. Residues 220–223 (REEE) constitute a propeptide that is removed on maturation. F227 bears the Phenylalanine amide mark. Residues 229–233 (KRDED) constitute a propeptide that is removed on maturation. F237 is modified (phenylalanine amide). Residues 239–242 (KRED) constitute a propeptide that is removed on maturation. Position 246 is a phenylalanine amide (F246). Residues 248–252 (KRDED) constitute a propeptide that is removed on maturation. F256 is modified (phenylalanine amide). The propeptide occupies 258–262 (KRDED). Phenylalanine amide is present on F266. Positions 268–271 (KRED) are excised as a propeptide. Phenylalanine amide is present on F275. Positions 277–280 (KRED) are excised as a propeptide. Phenylalanine amide is present on F284. Positions 286-334 (RELLAKLNKRTTSIQEDPQTRFRDVQMTRRNVAKKDKIEESNDEEANKS) are excised as a propeptide.

This sequence belongs to the FARP (FMRFamide related peptide) family. In terms of tissue distribution, neurons associated with smooth muscle fibers.

It localises to the secreted. Not known but it could act as a transmitter at neuromuscular synapses. The chain is Antho-RFamide neuropeptides from Calliactis parasitica (Sea anemone).